We begin with the raw amino-acid sequence, 450 residues long: Chromosomal replication initiator protein DnaA (450 aa).

The domain I, interacts with DnaA modulators stretch occupies residues 1-79 (MKDSYFDLNT…MEYAYDVAHD (79 aa)). Residues 79 to 112 (DFFKPELKVIKVVANPVNNQKSNQSNSDFVATDY) are domain II. The segment at 113-329 (QLNQNFTFDT…GAFNTLTLMA (217 aa)) is domain III, AAA+ region. Gly157, Gly159, Lys160, and Thr161 together coordinate ATP. The tract at residues 330 to 450 (RAGRPINVSN…NLSTKIKEKS (121 aa)) is domain IV, binds dsDNA.

The protein belongs to the DnaA family. As to quaternary structure, oligomerizes as a right-handed, spiral filament on DNA at oriC.

Its subcellular location is the cytoplasm. Plays an essential role in the initiation and regulation of chromosomal replication. ATP-DnaA binds to the origin of replication (oriC) to initiate formation of the DNA replication initiation complex once per cell cycle. Binds the DnaA box (a 9 base pair repeat at the origin) and separates the double-stranded (ds)DNA. Forms a right-handed helical filament on oriC DNA; dsDNA binds to the exterior of the filament while single-stranded (ss)DNA is stabiized in the filament's interior. The ATP-DnaA-oriC complex binds and stabilizes one strand of the AT-rich DNA unwinding element (DUE), permitting loading of DNA polymerase. After initiation quickly degrades to an ADP-DnaA complex that is not apt for DNA replication. Binds acidic phospholipids. The protein is Chromosomal replication initiator protein DnaA of Oenococcus oeni (strain ATCC BAA-331 / PSU-1).